A 217-amino-acid chain; its full sequence is Protein matrimony (217 aa).

The POLO box domain (PBD)-binding signature appears at 39–41 (STP). A phosphoserine mark is found at S63 and S66. The tract at residues 83–106 (KQQQQQQHQHCHRTQLKPPPFVLP) is disordered. The SAM domain occupies 157–217 (NHAANVEQIL…NRIMDVLHTL (61 aa)).

In terms of assembly, interacts with polo. Interacts with cort. In terms of processing, probably ubiquitinated: degraded during the oocyte-to-embryo transition by the anaphase promoting complex/cyclosome (APC/C) containing cort protein.

It is found in the nucleus. The protein localises to the chromosome. In terms of biological role, polo kinase inhibitor required to maintain G2 arrest in the meiotic cell cycle in females. Holds heterochromatically paired homologs together from the end of pachytene until metaphase I. Haploinsufficient locus for homologous achiasmate segregation and may be required for the maintenance of heterochromatic pairings. The polypeptide is Protein matrimony (Drosophila melanogaster (Fruit fly)).